A 378-amino-acid polypeptide reads, in one-letter code: Cytochrome b (378 aa).

4 helical membrane passes run 34 to 54, 78 to 99, 114 to 134, and 179 to 199; these read FGSL…FLAM, WFLR…FIHV, WNTG…GYVL, and FFTF…IHLL. Residues histidine 84 and histidine 98 each contribute to the heme b site. Residues histidine 183 and histidine 197 each contribute to the heme b site. Histidine 202 contacts a ubiquinone. A run of 4 helical transmembrane segments spans residues 227–247, 289–309, 321–341, and 348–368; these read YKDI…IWKF, LGGV…PFTH, LNQI…WIGA, and YILT…INPL.

This sequence belongs to the cytochrome b family. As to quaternary structure, the main subunits of complex b-c1 are: cytochrome b, cytochrome c1 and the Rieske protein. The cofactor is heme b.

It is found in the mitochondrion inner membrane. In terms of biological role, component of the ubiquinol-cytochrome c reductase complex (complex III or cytochrome b-c1 complex) that is part of the mitochondrial respiratory chain. The b-c1 complex mediates electron transfer from ubiquinol to cytochrome c. Contributes to the generation of a proton gradient across the mitochondrial membrane that is then used for ATP synthesis. The polypeptide is Cytochrome b (mt:Cyt-b) (Anopheles gambiae (African malaria mosquito)).